The primary structure comprises 137 residues: Endoribonuclease YbeY (137 aa).

Zn(2+) contacts are provided by histidine 105, histidine 109, and aspartate 115.

The protein belongs to the endoribonuclease YbeY family. Zn(2+) serves as cofactor.

Its subcellular location is the cytoplasm. In terms of biological role, single strand-specific metallo-endoribonuclease involved in late-stage 70S ribosome quality control and in maturation of the 3' terminus of the 16S rRNA. The protein is Endoribonuclease YbeY of Chlorobaculum tepidum (strain ATCC 49652 / DSM 12025 / NBRC 103806 / TLS) (Chlorobium tepidum).